We begin with the raw amino-acid sequence, 286 residues long: tRNA (guanine-N(7)-)-methyltransferase (286 aa).

S-adenosyl-L-methionine is bound by residues glycine 103, 126-127 (EI), 161-162 (NA), and cysteine 181. Residue aspartate 184 is part of the active site. 259–261 (TEE) is an S-adenosyl-L-methionine binding site.

Belongs to the class I-like SAM-binding methyltransferase superfamily. TrmB family. Forms a complex with TRM82.

The protein localises to the nucleus. The catalysed reaction is guanosine(46) in tRNA + S-adenosyl-L-methionine = N(7)-methylguanosine(46) in tRNA + S-adenosyl-L-homocysteine. Its pathway is tRNA modification; N(7)-methylguanine-tRNA biosynthesis. Catalyzes the formation of N(7)-methylguanine at position 46 (m7G46) in tRNA. The chain is tRNA (guanine-N(7)-)-methyltransferase from Vanderwaltozyma polyspora (strain ATCC 22028 / DSM 70294 / BCRC 21397 / CBS 2163 / NBRC 10782 / NRRL Y-8283 / UCD 57-17) (Kluyveromyces polysporus).